The sequence spans 455 residues: Mu-like prophage FluMu DNA circularization protein (455 aa).

The H-T-H motif DNA-binding region spans 368-387 (VILDNADAEQWTSYAALEQY).

It to phage Mu protein N.

The polypeptide is Mu-like prophage FluMu DNA circularization protein (Haemophilus influenzae (strain ATCC 51907 / DSM 11121 / KW20 / Rd)).